The following is a 128-amino-acid chain: Small ribosomal subunit protein eS8 (128 aa).

It belongs to the eukaryotic ribosomal protein eS8 family. Part of the 30S ribosomal subunit.

This chain is Small ribosomal subunit protein eS8, found in Methanococcus maripaludis (strain C6 / ATCC BAA-1332).